We begin with the raw amino-acid sequence, 269 residues long: Undecaprenyl-diphosphatase (269 aa).

Helical transmembrane passes span 1 to 21, 40 to 59, 87 to 107, 117 to 137, 147 to 166, 188 to 208, 220 to 240, and 248 to 268; these read MDIM…ILPI, GLTF…CVYF, FFII…EKPI, LIAL…TTGP, LRGA…PGVS, FSFL…MGEL, PLLA…ALLL, and LYPF…YLFA.

The protein belongs to the UppP family.

It is found in the cell inner membrane. It carries out the reaction di-trans,octa-cis-undecaprenyl diphosphate + H2O = di-trans,octa-cis-undecaprenyl phosphate + phosphate + H(+). In terms of biological role, catalyzes the dephosphorylation of undecaprenyl diphosphate (UPP). Confers resistance to bacitracin. This chain is Undecaprenyl-diphosphatase, found in Geobacter sulfurreducens (strain ATCC 51573 / DSM 12127 / PCA).